A 552-amino-acid polypeptide reads, in one-letter code: MAKFQAPVINDNPLGWGPCAVPDQFKDMPYQPFSKGDRLGKVADWTGATYQDKRYTNKYSSQFGGGSQYAYFHDEDETSFQLVDTTKMQKTAYQRNRLRFAQRNLRRDKDRRNMLQFNMQTLPKSAKQKERDRLRLQKKFQKQFGVRQKWDQKSQAQLKPRDSSVEVRSDWEVKEEMDFPRLMKMRYMEVSDPLDIECCGALEFYDKAFDRITTRNERPLKSIKRIFHTVTTTDDPVIRKLAKTQGNVFATDAILATLMCCTRSVNSWDIVVQRVGSKIFFDKRDNSDFDLLTVSETANEPPQDDVNSLNSPRNLAMEATYINHNFSQQCLRMGKEKHTFPNPNPFIEDDVDKNEVASVAYRYRRWKLGDDIDLVVRCEHDGFMTGANGEVSFVNIKTLNEWDSRYCNGVDWRQKLDSQRGAVIATELKNNSYKLARWTCCALLAGSEYLKLGYVSRCHVKDSTRHVVLGTQQFKPNEFANQINLSMENAWGILRCVVDICMKLDEGKYLILKDPNKQVIRIYSLPDGTFSSDEEDDDDDEEEEEEVEEEES.

The tract at residues 288 to 302 (DFDLLTVSETANEPP) is RNA gate. Residues 526–552 (PDGTFSSDEEDDDDDEEEEEEVEEEES) form a disordered region. Acidic residues predominate over residues 532 to 552 (SDEEDDDDDEEEEEEVEEEES).

It belongs to the eIF-3 subunit D family. As to quaternary structure, component of the eukaryotic translation initiation factor 3 (eIF-3) complex, which is composed of 13 subunits: eif3a, eif3b, eif3c, eif3d, eif3e, eif3f, eif3g, eif3h, eif3i, eif3j, eif3k, eif3l and eif3m.

It localises to the cytoplasm. MRNA cap-binding component of the eukaryotic translation initiation factor 3 (eIF-3) complex, which is involved in protein synthesis of a specialized repertoire of mRNAs and, together with other initiation factors, stimulates binding of mRNA and methionyl-tRNAi to the 40S ribosome. The eIF-3 complex specifically targets and initiates translation of a subset of mRNAs involved in cell proliferation. In the eIF-3 complex, eif3d specifically recognizes and binds the 7-methylguanosine cap of a subset of mRNAs. This is Eukaryotic translation initiation factor 3 subunit D (eif3d) from Xenopus tropicalis (Western clawed frog).